The sequence spans 768 residues: DNA ligase (768 aa).

Over residues 1 to 11 (MSPSAPANSAP) the composition is skewed to low complexity. The segment at 1–28 (MSPSAPANSAPDPDRNGVPDVGPASAAP) is disordered. NAD(+) contacts are provided by residues 62 to 66 (DAEYD), 111 to 112 (SI), and E148. Residue K150 is the N6-AMP-lysine intermediate of the active site. R171, E238, K361, and K385 together coordinate NAD(+). Residues C484, C487, C502, and C508 each coordinate Zn(2+). The region spanning 670-759 (AAELPLAGKT…EADADADAEG (90 aa)) is the BRCT domain.

It belongs to the NAD-dependent DNA ligase family. LigA subfamily. Mg(2+) serves as cofactor. Requires Mn(2+) as cofactor.

It catalyses the reaction NAD(+) + (deoxyribonucleotide)n-3'-hydroxyl + 5'-phospho-(deoxyribonucleotide)m = (deoxyribonucleotide)n+m + AMP + beta-nicotinamide D-nucleotide.. DNA ligase that catalyzes the formation of phosphodiester linkages between 5'-phosphoryl and 3'-hydroxyl groups in double-stranded DNA using NAD as a coenzyme and as the energy source for the reaction. It is essential for DNA replication and repair of damaged DNA. The sequence is that of DNA ligase from Leptothrix cholodnii (strain ATCC 51168 / LMG 8142 / SP-6) (Leptothrix discophora (strain SP-6)).